Here is a 309-residue protein sequence, read N- to C-terminus: Homoserine O-succinyltransferase (309 aa).

The active-site Acyl-thioester intermediate is the cysteine 142. The substrate site is built by lysine 163 and serine 192. Histidine 235 (proton acceptor) is an active-site residue. Residue glutamate 237 is part of the active site. Residue arginine 249 participates in substrate binding.

Belongs to the MetA family. Homodimer.

It localises to the cytoplasm. The enzyme catalyses L-homoserine + succinyl-CoA = O-succinyl-L-homoserine + CoA. Its pathway is amino-acid biosynthesis; L-methionine biosynthesis via de novo pathway; O-succinyl-L-homoserine from L-homoserine: step 1/1. Transfers a succinyl group from succinyl-CoA to L-homoserine, forming succinyl-L-homoserine. This chain is Homoserine O-succinyltransferase, found in Escherichia fergusonii (strain ATCC 35469 / DSM 13698 / CCUG 18766 / IAM 14443 / JCM 21226 / LMG 7866 / NBRC 102419 / NCTC 12128 / CDC 0568-73).